The chain runs to 563 residues: Probable CoA ligase CCL11 (563 aa).

ATP-binding positions include 195-203 (TSGTTSSPK), 328-333 (HGYGMT), Asp-426, 438-441 (IKDR), and Lys-534. The SBD1 stretch occupies residues 263-328 (DGEIIFNLIR…TESLGFVISH (66 aa)). The interval 329 to 405 (GYGMTEMLGV…LKGSSIMLGY (77 aa)) is SBD2.

It belongs to the ATP-dependent AMP-binding enzyme family.

Its subcellular location is the cytoplasm. The protein resides in the cytosol. The chain is Probable CoA ligase CCL11 from Humulus lupulus (European hop).